Consider the following 206-residue polypeptide: Large ribosomal subunit protein uL4 (206 aa).

A disordered region spans residues 49–76 (QSAKTRTEVRGGGIKPWRQKGTGRARQG).

Belongs to the universal ribosomal protein uL4 family. As to quaternary structure, part of the 50S ribosomal subunit.

In terms of biological role, one of the primary rRNA binding proteins, this protein initially binds near the 5'-end of the 23S rRNA. It is important during the early stages of 50S assembly. It makes multiple contacts with different domains of the 23S rRNA in the assembled 50S subunit and ribosome. Its function is as follows. Forms part of the polypeptide exit tunnel. In Clostridium botulinum (strain Alaska E43 / Type E3), this protein is Large ribosomal subunit protein uL4.